The chain runs to 764 residues: G-type lectin S-receptor-like serine/threonine-protein kinase SD3-1 (764 aa).

Residues 1 to 24 (MKMLRALLLCLSLVFFLAFQIVVS) form the signal peptide. 2 Bulb-type lectin domains span residues 25–151 (EIQL…QSFG) and 154–279 (TDTL…WKPV). The Extracellular portion of the chain corresponds to 25-442 (EIQLGSKLVV…TKSHSICIPC (418 aa)). Residues Asn-92, Asn-198, and Asn-248 are each glycosylated (N-linked (GlcNAc...) asparagine). Residues 283 to 320 (VENQCRVFATCGSQVCSFNSSGYTECNCPFNAFVSVSD) enclose the EGF-like; atypical domain. Intrachain disulfides connect Cys-287-Cys-298, Cys-293-Cys-308, Cys-332-Cys-413, Cys-365-Cys-388, and Cys-369-Cys-375. N-linked (GlcNAc...) asparagine glycosylation is found at Asn-301 and Asn-353. The region spanning 332–413 (CKSGFNMVKF…LSSISYVKTC (82 aa)) is the Apple domain. Asn-423 is a glycosylation site (N-linked (GlcNAc...) asparagine). Residues 443 to 463 (LVGATSTTLVLFLGFQLGIVV) traverse the membrane as a helical segment. Topologically, residues 464-764 (YIYRRKKKLA…SESSQSLYEP (301 aa)) are cytoplasmic. The Protein kinase domain maps to 466-764 (YRRKKKLAKK…SESSQSLYEP (299 aa)). ATP-binding positions include 508-516 (IGPQIFKGV) and Lys-526. The caM-binding stretch occupies residues 586–603 (LRSKKLTWRIRTDTCLSV). Residues 738 to 764 (DPPPPPFACARSSPTNSSESSQSLYEP) are disordered. Residues 749 to 764 (SSPTNSSESSQSLYEP) are compositionally biased toward low complexity.

It localises to the cell membrane. The enzyme catalyses L-seryl-[protein] + ATP = O-phospho-L-seryl-[protein] + ADP + H(+). It carries out the reaction L-threonyl-[protein] + ATP = O-phospho-L-threonyl-[protein] + ADP + H(+). The sequence is that of G-type lectin S-receptor-like serine/threonine-protein kinase SD3-1 (SD31) from Arabidopsis thaliana (Mouse-ear cress).